The primary structure comprises 470 residues: Cysteine--tRNA ligase (470 aa).

Cysteine 30 is a binding site for Zn(2+). Residues 32–42 (PTVYNYIHIGN) carry the 'HIGH' region motif. 3 residues coordinate Zn(2+): cysteine 211, histidine 236, and glutamate 240. A 'KMSKS' region motif is present at residues 268-272 (KMSKS). Residue lysine 271 participates in ATP binding.

This sequence belongs to the class-I aminoacyl-tRNA synthetase family. Monomer. The cofactor is Zn(2+).

It is found in the cytoplasm. It catalyses the reaction tRNA(Cys) + L-cysteine + ATP = L-cysteinyl-tRNA(Cys) + AMP + diphosphate. The protein is Cysteine--tRNA ligase of Fervidobacterium nodosum (strain ATCC 35602 / DSM 5306 / Rt17-B1).